Consider the following 86-residue polypeptide: Cyclin-dependent kinase inhibitor 6 (86 aa).

Low complexity predominate over residues 1–15; sequence MAAAAATVTAVQPAA. The segment at 1-23 is disordered; the sequence is MAAAAATVTAVQPAASSCGKRDG.

The protein belongs to the CDI family. ICK/KRP subfamily.

In Oryza sativa subsp. japonica (Rice), this protein is Cyclin-dependent kinase inhibitor 6 (KRP6).